We begin with the raw amino-acid sequence, 469 residues long: Sorting and assembly machinery component 50 homolog (469 aa).

The 81-residue stretch at 45–125 folds into the POTRA domain; it reads VVVQHVHFDG…LDVTFEVTEL (81 aa). Lysine 255 carries the N6-methyllysine modification.

This sequence belongs to the SAM50/omp85 family. Associates with the mitochondrial contact site and cristae organizing system (MICOS) complex, composed of at least MICOS10/MIC10, CHCHD3/MIC19, CHCHD6/MIC25, APOOL/MIC27, IMMT/MIC60, APOO/MIC23/MIC26 and QIL1/MIC13. This complex was also known under the names MINOS or MitOS complex. The MICOS complex associates with mitochondrial outer membrane proteins SAMM50, MTX1 and MTX2 (together described as components of the mitochondrial outer membrane sorting assembly machinery (SAM) complex) and DNAJC11, mitochondrial inner membrane protein TMEM11 and with HSPA9. The MICOS and SAM complexes together with DNAJC11 are part of a large protein complex spanning both membranes termed the mitochondrial intermembrane space bridging (MIB) complex. Interacts with IMMT/MIC60. Interacts with CHCHD3/MIC19. Interacts with ARMC1.

Its subcellular location is the mitochondrion outer membrane. It localises to the cytoplasm. The protein localises to the mitochondrion. Functionally, plays a crucial role in the maintenance of the structure of mitochondrial cristae and the proper assembly of the mitochondrial respiratory chain complexes. Required for the assembly of TOMM40 into the TOM complex. This Bos taurus (Bovine) protein is Sorting and assembly machinery component 50 homolog (SAMM50).